Here is a 332-residue protein sequence, read N- to C-terminus: MKTLGEFIVEKQHEFSHATGELTALLSAIKLGAKIIHRDINKAGLVDILGASGAENVQGEVQQKLDLFANEKLKAALRARDIVAGIASEEEDEIVVFEGCEHAKYVVLMDPLDGSSNIDVNVSVGTIFSIYRRVTPVGTPVTEEDFLQPGNKQVAAGYVVYGSSTMLVYTTGCGVHAFTYDPSLGVFCLCQERMRFPEKGNTYSINEGNYIKFPQGVKKYIKYCQEEDKATQRPYTSRYIGSLVADFHRNLLKGGIYLYPSTASHPEGKLRLLYECNPMAFLAEQAGGKASDGKERILDIIPESLHQRRSFFVGNNHMVEDVENFIKAFPDA.

Mg(2+) contacts are provided by glutamate 89, aspartate 110, leucine 112, and aspartate 113. Residues 113–116 (DGSS), asparagine 206, tyrosine 239, 257–259 (YLY), and lysine 269 contribute to the substrate site. Residue glutamate 275 participates in Mg(2+) binding.

Belongs to the FBPase class 1 family. Homotetramer. The cofactor is Mg(2+).

Its subcellular location is the cytoplasm. The catalysed reaction is beta-D-fructose 1,6-bisphosphate + H2O = beta-D-fructose 6-phosphate + phosphate. It functions in the pathway carbohydrate biosynthesis; gluconeogenesis. This chain is Fructose-1,6-bisphosphatase class 1, found in Klebsiella pneumoniae subsp. pneumoniae (strain ATCC 700721 / MGH 78578).